The primary structure comprises 353 residues: Replication factor C subunit 2 (353 aa).

Met-1 carries the post-translational modification N-acetylmethionine. ATP is bound by residues Val-28, Arg-32, 65 to 73, Asn-171, and Arg-229; that span reads GPPGTGKTS.

This sequence belongs to the activator 1 small subunits family. Replication factor C (RFC) is a heteropentamer of subunits RFC1, RFC2, RFC3, RFC4 and RFC5 and forms a complex with POL30/PCNA in the presence of ATP. Component of the RAD24-RFC complex which consists of RAD14, RFC2, RFC3, RFC4 and RFC5 and associates with the checkpoint clamp DDC1:MEC3:RAD17 complex. Component of the ELG1-RFC complex which consists of ELG1, RFC2, RFC3, RFC4 and RFC5. Component of the CTF18-RFC complex, which consists of CTF18, CTF8, DCC1, RFC2, RFC3, RFC4 and RFC5. RFC2 interacts with ECO1.

The protein resides in the nucleus. Component of ATP-dependent clamp loader (RFC and RFC-like) complexes for DNA clamps, such as the POL30/PCNA homotrimer and the checkpoint clamp DDC1:MEC3:RAD17 complex. During a clamp loading circle, the RFC:clamp complex binds to DNA and the recognition of the double-stranded/single-stranded junction stimulates ATP hydrolysis by RFC. The complex presumably provides bipartite ATP sites in which one subunit supplies a catalytic site for hydrolysis of ATP bound to the neighboring subunit. Dissociation of RFC from the clamp leaves the clamp encircling DNA. Component of the replication factor C (RFC or activator 1) complex which loads POL30/PCNA and acts during elongation of primed DNA templates by DNA polymerase delta and epsilon. RFC has an essential but redundant activity in sister chromatid cohesion establishment. Component of the RFC-like complex CTF18-RFC which is required for efficient establishment of chromosome cohesion during S-phase and may load or unload POL30/PCNA. Component of the RFC-like RAD24-RFC complex which loads the checkpoint clamp DDC1:MEC3:RAD17 complex and is involved in DNA repair pathways. Component of the RFC-like ELG1-RFC complex which appears to have a role in DNA replication, replication fork re-start, recombination and repair. RFC2 binds ATP and single-stranded DNA. The chain is Replication factor C subunit 2 (RFC2) from Saccharomyces cerevisiae (strain ATCC 204508 / S288c) (Baker's yeast).